A 678-amino-acid chain; its full sequence is UvrABC system protein B (678 aa).

In terms of domain architecture, Helicase ATP-binding spans Glu-31–Val-417. Gly-44–Thr-51 is a binding site for ATP. Residues Tyr-97–Ile-120 carry the Beta-hairpin motif. A Helicase C-terminal domain is found at Gln-436 to Leu-602. Positions Asp-603–Ala-625 are disordered. Residues Gln-638–Gln-673 enclose the UVR domain.

Belongs to the UvrB family. Forms a heterotetramer with UvrA during the search for lesions. Interacts with UvrC in an incision complex.

The protein resides in the cytoplasm. The UvrABC repair system catalyzes the recognition and processing of DNA lesions. A damage recognition complex composed of 2 UvrA and 2 UvrB subunits scans DNA for abnormalities. Upon binding of the UvrA(2)B(2) complex to a putative damaged site, the DNA wraps around one UvrB monomer. DNA wrap is dependent on ATP binding by UvrB and probably causes local melting of the DNA helix, facilitating insertion of UvrB beta-hairpin between the DNA strands. Then UvrB probes one DNA strand for the presence of a lesion. If a lesion is found the UvrA subunits dissociate and the UvrB-DNA preincision complex is formed. This complex is subsequently bound by UvrC and the second UvrB is released. If no lesion is found, the DNA wraps around the other UvrB subunit that will check the other stand for damage. The sequence is that of UvrABC system protein B from Mannheimia succiniciproducens (strain KCTC 0769BP / MBEL55E).